Consider the following 270-residue polypeptide: Ribonuclease HII (270 aa).

The RNase H type-2 domain maps to 28 to 222 (RQVAGADEAG…VSGRQGAPPR (195 aa)). A divalent metal cation is bound by residues D34, E35, and D128.

It belongs to the RNase HII family. Mn(2+) is required as a cofactor. Requires Mg(2+) as cofactor.

Its subcellular location is the cytoplasm. The catalysed reaction is Endonucleolytic cleavage to 5'-phosphomonoester.. In terms of biological role, endonuclease that specifically degrades the RNA of RNA-DNA hybrids. This Salinispora tropica (strain ATCC BAA-916 / DSM 44818 / JCM 13857 / NBRC 105044 / CNB-440) protein is Ribonuclease HII.